The sequence spans 299 residues: Methylsterol monooxygenase 1-2 (299 aa).

Transmembrane regions (helical) follow at residues 39–59, 96–116, and 118–138; these read CHNI…LVFI, FILV…MIEI, and SGLP…YFLV. A Fatty acid hydroxylase domain is found at 132 to 267; it reads LVVYFLVEDY…FTYCDYIYGT (136 aa). Positions 147–151 match the Histidine box-1 motif; sequence HRFFH. A Histidine box-2 motif is present at residues 160 to 164; that stretch reads HHIHH. A helical membrane pass occupies residues 189-209; it reads TFLGPAIAPGHMITFWLWIAL. The Histidine box-3 signature appears at 239-245; it reads YHDYHHY.

This sequence belongs to the sterol desaturase family. Interacts with ACBP1. Fe cation is required as a cofactor. In terms of tissue distribution, expressed in embryo sacs, pollen and trichomes. Observed in leaves, roots, siliques and flowers.

The protein resides in the endoplasmic reticulum membrane. The enzyme catalyses 4,4-dimethyl-5alpha-cholest-7-en-3beta-ol + 6 Fe(II)-[cytochrome b5] + 3 O2 + 5 H(+) = 4alpha-carboxy-4beta-methyl-5alpha-cholest-7-ene-3beta-ol + 6 Fe(III)-[cytochrome b5] + 4 H2O. It catalyses the reaction 24-methylenecycloartanol + 6 Fe(II)-[cytochrome b5] + 3 O2 + 5 H(+) = 4alpha-carboxy-4beta,14alpha-dimethyl-9beta,19-cyclo-5alpha-ergost-24(24(1))-en-3beta-ol + 6 Fe(III)-[cytochrome b5] + 4 H2O. Non-heme iron oxygenase involved in sterols biosynthesis by catalyzing the removal of the first methyl group at the C-4 position. 4,4-dimethyl-9-beta,19-cyclopropylsterols such as 24-methylenecycloartanol are the preferred substrates. Acts as a rate-limiting enzyme in the sterol pathway via interaction with ACBP1; sterols serve as lipid modulators for gene expression of homeodomain-leucine zipper IV transcription factors. Together with SMO1-1, involved in the maintenance of sterol composition to balance auxin and cytokinin activities during embryogenesis. The chain is Methylsterol monooxygenase 1-2 from Arabidopsis thaliana (Mouse-ear cress).